The chain runs to 128 residues: Sulfurtransferase TusD (128 aa).

Cys-78 (cysteine persulfide intermediate) is an active-site residue.

This sequence belongs to the DsrE/TusD family. In terms of assembly, heterohexamer, formed by a dimer of trimers. The hexameric TusBCD complex contains 2 copies each of TusB, TusC and TusD. The TusBCD complex interacts with TusE.

The protein localises to the cytoplasm. Functionally, part of a sulfur-relay system required for 2-thiolation of 5-methylaminomethyl-2-thiouridine (mnm(5)s(2)U) at tRNA wobble positions. Accepts sulfur from TusA and transfers it in turn to TusE. The protein is Sulfurtransferase TusD of Escherichia coli O157:H7.